Consider the following 482-residue polypeptide: Methylenetetrahydrofolate--tRNA-(uracil-5-)-methyltransferase TrmFO (482 aa).

11–16 (GAGLAG) contributes to the FAD binding site.

The protein belongs to the MnmG family. TrmFO subfamily. The cofactor is FAD.

It localises to the cytoplasm. The catalysed reaction is uridine(54) in tRNA + (6R)-5,10-methylene-5,6,7,8-tetrahydrofolate + NADH + H(+) = 5-methyluridine(54) in tRNA + (6S)-5,6,7,8-tetrahydrofolate + NAD(+). It catalyses the reaction uridine(54) in tRNA + (6R)-5,10-methylene-5,6,7,8-tetrahydrofolate + NADPH + H(+) = 5-methyluridine(54) in tRNA + (6S)-5,6,7,8-tetrahydrofolate + NADP(+). Catalyzes the folate-dependent formation of 5-methyl-uridine at position 54 (M-5-U54) in all tRNAs. The sequence is that of Methylenetetrahydrofolate--tRNA-(uracil-5-)-methyltransferase TrmFO from Nitratidesulfovibrio vulgaris (strain DP4) (Desulfovibrio vulgaris).